Reading from the N-terminus, the 418-residue chain is Voltage-gated ClC-type chloride channel ClcB (418 aa).

The next 10 helical transmembrane spans lie at 5-25, 54-74, 146-166, 168-188, 222-242, 258-278, 291-311, 316-336, 352-372, and 380-400; these read LLIATVVGILAAFAVAGFRHA, LLTPALGGLAAGLLLMGWQKF, LWIACGAAAGMAAAYRAPLAG, LFIAEVLFGTMMLASLGPVII, ALIISTGVLAGLCGPLLLTLM, WQLALGGLIVGLLSLFTPAVW, APPLLMIIAGIFLCKLFAVLA, GAPGGVFTPTLFIGLAIGMLY, LLLGLTGMATLLAATTHAPIM, and MTGEYQLLPGLLIACVIASVI.

It belongs to the chloride channel (TC 2.A.49) family. ClcB subfamily.

It is found in the cell inner membrane. Functionally, probably acts as an electrical shunt for an outwardly-directed proton pump that is linked to amino acid decarboxylation, as part of the extreme acid resistance (XAR) response. The sequence is that of Voltage-gated ClC-type chloride channel ClcB from Escherichia coli (strain SMS-3-5 / SECEC).